The primary structure comprises 1203 residues: Transmembrane channel-like protein 2 (1203 aa).

Disordered regions lie at residues M1 to R39 and P64 to K90. Residues F73–K86 are compositionally biased toward acidic residues. Residues V191 to A213 traverse the membrane as a helical segment. N-linked (GlcNAc...) asparagine glycosylation is present at N225. A run of 6 helical transmembrane segments spans residues Y276–L298, F369–M391, A406–I428, L441–L463, M665–L687, and F714–S736. A glycan (N-linked (GlcNAc...) asparagine) is linked at N748. A helical transmembrane segment spans residues I780 to L802. Disordered regions lie at residues E826–P908, K927–Q1039, A1059–L1087, and N1112–D1203. Over residues N865–G874 the composition is skewed to polar residues. The span at D898 to P908 shows a compositional bias: low complexity. Residues K927 to E945 show a composition bias toward basic and acidic residues. 2 stretches are compositionally biased toward low complexity: residues Q973 to S997 and S1022 to S1035. Residues V1061–D1076 show a composition bias toward polar residues. 2 stretches are compositionally biased toward basic and acidic residues: residues S1133–Q1147 and P1172–D1203.

The protein belongs to the TMC family.

The protein resides in the membrane. Its function is as follows. Probable ion channel. The chain is Transmembrane channel-like protein 2 (tmc-2) from Caenorhabditis elegans.